We begin with the raw amino-acid sequence, 258 residues long: MSEFNEKPEKLIVDGLRLDGRKFDELRPIKIEASVLKRADGSCYLEMGKNKVIAAVFGPREVHPRHLQDPSKAIIRYRYNMAPFSVEERKRPGPDRRSIEISKVSKEAFEAVIMKELFPRSAIDIFVEVLQADAGSRTACLNAASVALVDAGVPMKGMITSVAVGKADGQLVLDPMKEEDNFGEADMPFAFLIRNGKIESIALLQMDGRMTRDEVKQAIELAKKGALQIYEMQREAILRRYIEVGEEMDEITEGGEDA.

This sequence belongs to the RNase PH family. Rrp41 subfamily. In terms of assembly, component of the archaeal exosome complex. Forms a hexameric ring-like arrangement composed of 3 Rrp41-Rrp42 heterodimers. The hexameric ring associates with a trimer of Rrp4 and/or Csl4 subunits.

It localises to the cytoplasm. Its function is as follows. Catalytic component of the exosome, which is a complex involved in RNA degradation. Has 3'-&gt;5' exoribonuclease activity. Can also synthesize heteromeric RNA-tails. The protein is Exosome complex component Rrp41 of Archaeoglobus fulgidus (strain ATCC 49558 / DSM 4304 / JCM 9628 / NBRC 100126 / VC-16).